The following is a 130-amino-acid chain: Small ribosomal subunit protein uS8 (130 aa).

Belongs to the universal ribosomal protein uS8 family. In terms of assembly, part of the 30S ribosomal subunit. Contacts proteins S5 and S12.

Functionally, one of the primary rRNA binding proteins, it binds directly to 16S rRNA central domain where it helps coordinate assembly of the platform of the 30S subunit. This is Small ribosomal subunit protein uS8 from Sodalis glossinidius (strain morsitans).